The chain runs to 627 residues: Bromodomain adjacent to zinc finger domain protein 1A (627 aa).

The segment at 222 to 272 (NARCKVCRKKGDGESMVLCDGCDRGHHIYCVRPKLKYVPEGDWFCPECHPK) adopts a PHD-type zinc-finger fold. Residues 270-503 (HPKQRSHRLP…NRRSSGRHHG (234 aa)) form a disordered region. Basic residues predominate over residues 272–283 (KQRSHRLPSRHR). The stretch at 281-327 (RHRYSMDSDEEEEEELDQKEEEEEEEEQEELSESENEQEDEMSEEES) forms a coiled coil. Residues 287 to 326 (DSDEEEEEELDQKEEEEEEEEQEELSESENEQEDEMSEEE) are compositionally biased toward acidic residues. A compositionally biased stretch (low complexity) spans 348-359 (TGKLGPKPKTGK). Composition is skewed to polar residues over residues 386 to 395 (EPTSRLSASD) and 402 to 412 (SPNSSLVNVVT). Basic residues predominate over residues 417-431 (GRGKGKGRGRGRGRL). Polar residues predominate over residues 486–496 (DISSLEQGNRR). A Bromo domain is found at 502–605 (HGVHELSACE…SFFITEAQNL (104 aa)).

It belongs to the WAL family. As to quaternary structure, together with p18 and p20 proteins, it forms the Xenopus version of CHRAC. Phosphorylated in mitosis.

The protein resides in the nucleus. In terms of biological role, regulatory subunit of a chromatin remodeling complex, which forms ordered nucleosome arrays on chromatin and slides edge- and center-positioned histone octamers away from their original location on the DNA template to facilitate access to DNA during DNA-templated processes such as DNA replication, transcription, and repair. Involved in regulating the spacing of nucleosomes along the chromatin and have the ability to slide mononucleosomes to the center of a DNA template in an ATP-dependent manner. May play a role in transcriptional regulation. This Xenopus laevis (African clawed frog) protein is Bromodomain adjacent to zinc finger domain protein 1A (baz1a).